The sequence spans 181 residues: Shikimate kinase 2 (181 aa).

Residue G12–T17 participates in ATP binding. Mg(2+) contacts are provided by T16 and D32. Residues D34, R58, and G79 each contribute to the substrate site. The interval E112 to K126 is LID domain. An ATP-binding site is contributed by R120. R139 serves as a coordination point for substrate.

It belongs to the shikimate kinase family. AroL subfamily. As to quaternary structure, monomer. The cofactor is Mg(2+).

It localises to the cytoplasm. It carries out the reaction shikimate + ATP = 3-phosphoshikimate + ADP + H(+). It functions in the pathway metabolic intermediate biosynthesis; chorismate biosynthesis; chorismate from D-erythrose 4-phosphate and phosphoenolpyruvate: step 5/7. Functionally, catalyzes the specific phosphorylation of the 3-hydroxyl group of shikimic acid using ATP as a cosubstrate. This Escherichia fergusonii (strain ATCC 35469 / DSM 13698 / CCUG 18766 / IAM 14443 / JCM 21226 / LMG 7866 / NBRC 102419 / NCTC 12128 / CDC 0568-73) protein is Shikimate kinase 2.